The chain runs to 213 residues: 5-methylthioribulose-1-phosphate/5-deoxyribulose-1-phosphate aldolase (213 aa).

Residue glutamate 73 is the Proton donor/acceptor of the active site. The Co(2+) site is built by glutamate 73, histidine 92, histidine 94, and histidine 155.

The protein belongs to the aldolase class II family. Requires Co(2+) as cofactor.

It catalyses the reaction 5-(methylsulfanyl)-D-ribulose 1-phosphate = 2-(methylsulfanyl)acetaldehyde + dihydroxyacetone phosphate. The enzyme catalyses 5-deoxy-D-ribulose 1-phosphate = dihydroxyacetone phosphate + acetaldehyde. The protein operates within amino-acid biosynthesis; L-methionine biosynthesis via salvage pathway. Its function is as follows. Uses 5-methylthioribulose-1-phosphate to yield 2-(methylthio)acetaldehyde and dihydroxyacetone phosphate. Can also use 5-deoxyribulose 1-phosphate to yield acetaldehyde and dihydroxyacetone phosphate. Part of a bifunctional DHAP-shunt salvage pathway for SAM by-products. This is 5-methylthioribulose-1-phosphate/5-deoxyribulose-1-phosphate aldolase from Escherichia coli O45:K1 (strain S88 / ExPEC).